Consider the following 181-residue polypeptide: Regulator of G-protein signaling 5 (181 aa).

In terms of domain architecture, RGS spans 64-180 (SLDKLLQSNY…VRSEFYKELI (117 aa)).

The protein resides in the cytoplasm. It is found in the membrane. In terms of biological role, inhibits signal transduction by increasing the GTPase activity of G protein alpha subunits thereby driving them into their inactive GDP-bound form. Binds to G(i)-alpha and G(o)-alpha, but not to G(s)-alpha. This chain is Regulator of G-protein signaling 5 (Rgs5), found in Rattus norvegicus (Rat).